The chain runs to 97 residues: Co-chaperonin GroES (97 aa).

Belongs to the GroES chaperonin family. Heptamer of 7 subunits arranged in a ring. Interacts with the chaperonin GroEL.

It localises to the cytoplasm. Together with the chaperonin GroEL, plays an essential role in assisting protein folding. The GroEL-GroES system forms a nano-cage that allows encapsulation of the non-native substrate proteins and provides a physical environment optimized to promote and accelerate protein folding. GroES binds to the apical surface of the GroEL ring, thereby capping the opening of the GroEL channel. The sequence is that of Co-chaperonin GroES from Pseudomonas savastanoi pv. phaseolicola (strain 1448A / Race 6) (Pseudomonas syringae pv. phaseolicola (strain 1448A / Race 6)).